Consider the following 156-residue polypeptide: SsrA-binding protein (156 aa).

Positions 135–150 (KRDTIKDREWQRDRSR) are enriched in basic and acidic residues. The tract at residues 135 to 156 (KRDTIKDREWQRDRSRIMKKNT) is disordered.

Belongs to the SmpB family.

The protein resides in the cytoplasm. Its function is as follows. Required for rescue of stalled ribosomes mediated by trans-translation. Binds to transfer-messenger RNA (tmRNA), required for stable association of tmRNA with ribosomes. tmRNA and SmpB together mimic tRNA shape, replacing the anticodon stem-loop with SmpB. tmRNA is encoded by the ssrA gene; the 2 termini fold to resemble tRNA(Ala) and it encodes a 'tag peptide', a short internal open reading frame. During trans-translation Ala-aminoacylated tmRNA acts like a tRNA, entering the A-site of stalled ribosomes, displacing the stalled mRNA. The ribosome then switches to translate the ORF on the tmRNA; the nascent peptide is terminated with the 'tag peptide' encoded by the tmRNA and targeted for degradation. The ribosome is freed to recommence translation, which seems to be the essential function of trans-translation. This chain is SsrA-binding protein, found in Legionella pneumophila (strain Paris).